Here is a 356-residue protein sequence, read N- to C-terminus: MAEKAKAEGNNFVKKLLSSNLTWSIVAFILLVIICTIFQHDFLALSWNSNTGGLAGPLITMLQESARYLMIATGMTLVISTAGIDLSVGSVMAVAGAAAMQTLSNGMNVWLSILIALAVGLAIGCVNGALVSFLGLQPFITTLIMMLAGRGMAKVITSGENTDASAVAGNEPLKWFANGFILGIPANFVIAVIIVILVGLLCRKTAMGMMIEAVGINQEASRMTGIKPKKILFLVYAISGFLAAIAGLFATASVMRVDVVKTGQDLEMYAILAVVIGGTSLLGGKFSLAGSAVGAVIIAMIRKTIITLGVNAEATPAFFAVVVIVICVMQAPKIHNLSANMKRKRALKAQAKAVAA.

The next 7 helical transmembrane spans lie at 25 to 45, 77 to 97, 113 to 133, 180 to 200, 231 to 251, 268 to 290, and 308 to 328; these read IVAFILLVIICTIFQHDFLAL, LVISTAGIDLSVGSVMAVAGA, ILIALAVGLAIGCVNGALVSF, FILGIPANFVIAVIIVILVGL, ILFLVYAISGFLAAIAGLFAT, MYAILAVVIGGTSLLGGKFSLAG, and LGVNAEATPAFFAVVVIVICV.

The protein belongs to the binding-protein-dependent transport system permease family. In terms of assembly, the complex is composed of an ATP-binding protein (FruK), two transmembrane proteins (FruF and FruG) and a solute-binding protein (FruE).

It localises to the cell membrane. Its function is as follows. Part of the high-affinity ABC transporter complex FruEKFG involved in fructose uptake. Can also transport ribose and xylose, with lower affinity. Probably responsible for the translocation of the substrate across the membrane. The sequence is that of Fructose import permease protein FruF from Bifidobacterium longum (strain NCC 2705).